Reading from the N-terminus, the 339-residue chain is Phenylalanine--tRNA ligase alpha subunit (339 aa).

Glu-250 is a Mg(2+) binding site.

The protein belongs to the class-II aminoacyl-tRNA synthetase family. Phe-tRNA synthetase alpha subunit type 1 subfamily. As to quaternary structure, tetramer of two alpha and two beta subunits. It depends on Mg(2+) as a cofactor.

Its subcellular location is the cytoplasm. The catalysed reaction is tRNA(Phe) + L-phenylalanine + ATP = L-phenylalanyl-tRNA(Phe) + AMP + diphosphate + H(+). The polypeptide is Phenylalanine--tRNA ligase alpha subunit (Bacteroides thetaiotaomicron (strain ATCC 29148 / DSM 2079 / JCM 5827 / CCUG 10774 / NCTC 10582 / VPI-5482 / E50)).